A 187-amino-acid chain; its full sequence is MQVSPAIVKGIAVSSLGLYAGILTSSTVISITTPINVLTQHLKNVLCTLGCWSTVLGGLATGAFGLSYYLAAPGERPNYLLCGLGVAPLSAAYLYLVSLFNHKLAPKCTRDQNDLEKQKDEKLPQHHPEVKDGEAACPFSKMNNAKTLKPESERSVKCHSYMSLHMSIVTGITIFTFGKCILDGFKA.

The next 3 membrane-spanning stretches (helical) occupy residues 11-31, 45-65, and 80-100; these read IAVS…VISI, VLCT…GAFG, and LLCG…VSLF. Basic and acidic residues predominate over residues 114 to 134; that stretch reads DLEKQKDEKLPQHHPEVKDGE. Positions 114-135 are disordered; it reads DLEKQKDEKLPQHHPEVKDGEA. The helical transmembrane segment at 162–182 threads the bilayer; the sequence is MSLHMSIVTGITIFTFGKCIL.

Belongs to the ATG33 family.

It localises to the membrane. This Saccharomyces cerevisiae (strain ATCC 204508 / S288c) (Baker's yeast) protein is Protein SCM4 (SCM4).